Reading from the N-terminus, the 908-residue chain is Bifunctional uridylyltransferase/uridylyl-removing enzyme (908 aa).

The tract at residues 1–360 is uridylyltransferase; it reads MFDTPAVFAR…LERIFRRRRR (360 aa). A uridylyl-removing region spans residues 361–718; that stretch reads IKQGYKVVRG…LDPDEDRDAT (358 aa). The HD domain maps to 477–599; it reads VDEHTIQTIV…VQTTKRLDLL (123 aa). ACT domains lie at 719–801 and 829–904; these read RACF…LKSR and IIEV…GAER.

It belongs to the GlnD family. Requires Mg(2+) as cofactor.

The catalysed reaction is [protein-PII]-L-tyrosine + UTP = [protein-PII]-uridylyl-L-tyrosine + diphosphate. It catalyses the reaction [protein-PII]-uridylyl-L-tyrosine + H2O = [protein-PII]-L-tyrosine + UMP + H(+). Uridylyltransferase (UTase) activity is inhibited by glutamine, while glutamine activates uridylyl-removing (UR) activity. Functionally, modifies, by uridylylation and deuridylylation, the PII regulatory proteins (GlnB and homologs), in response to the nitrogen status of the cell that GlnD senses through the glutamine level. Under low glutamine levels, catalyzes the conversion of the PII proteins and UTP to PII-UMP and PPi, while under higher glutamine levels, GlnD hydrolyzes PII-UMP to PII and UMP (deuridylylation). Thus, controls uridylylation state and activity of the PII proteins, and plays an important role in the regulation of nitrogen assimilation and metabolism. The sequence is that of Bifunctional uridylyltransferase/uridylyl-removing enzyme from Ruegeria pomeroyi (strain ATCC 700808 / DSM 15171 / DSS-3) (Silicibacter pomeroyi).